Reading from the N-terminus, the 277-residue chain is tRNA pseudouridine synthase A (277 aa).

Residue Asp-51 is the Nucleophile of the active site. A substrate-binding site is contributed by Tyr-109.

Belongs to the tRNA pseudouridine synthase TruA family. Homodimer.

The catalysed reaction is uridine(38/39/40) in tRNA = pseudouridine(38/39/40) in tRNA. Functionally, formation of pseudouridine at positions 38, 39 and 40 in the anticodon stem and loop of transfer RNAs. The protein is tRNA pseudouridine synthase A of Nitrosomonas eutropha (strain DSM 101675 / C91 / Nm57).